The sequence spans 542 residues: Multidrug transporter DTR1 (542 aa).

2 N-linked (GlcNAc...) asparagine glycosylation sites follow: asparagine 6 and asparagine 46. Residues 80–100 (LIFLIVIYNGFLGPLAGNVFI) traverse the membrane as a helical segment. Residues asparagine 111 and asparagine 118 are each glycosylated (N-linked (GlcNAc...) asparagine). 5 helical membrane-spanning segments follow: residues 119 to 139 (ATVS…GALA), 146 to 166 (ILYI…ASVP), 169 to 189 (IGSL…VISL), 210 to 230 (FMLG…LILL), and 237 to 257 (WLFG…ILLL). Asparagine 274 is a glycosylation site (N-linked (GlcNAc...) asparagine). The next 4 membrane-spanning stretches (helical) occupy residues 332–352 (IMTF…FCTY), 374–394 (IGAC…IGGH), 419–439 (ILTV…GWCI), and 441–461 (FHYH…GLTW). Asparagine 463 carries an N-linked (GlcNAc...) asparagine glycan. Transmembrane regions (helical) follow at residues 481–501 (AIAV…ALIA) and 511–531 (FCFL…LVLI).

The protein belongs to the major facilitator superfamily. CAR1 family.

It is found in the cell membrane. Functionally, plasma membrane acetic acid exporter, relieving the stress induced upon cells within hemocytes, and thus enabling increased proliferation and virulence against Galleria mellonella larvae. Confers resistance to weak acid and oxidative stress, but not to antifungal drugs. This chain is Multidrug transporter DTR1, found in Candida glabrata (strain ATCC 2001 / BCRC 20586 / JCM 3761 / NBRC 0622 / NRRL Y-65 / CBS 138) (Yeast).